Consider the following 195-residue polypeptide: Putative inactive carbonic anhydrase 5B-like protein (195 aa).

Residue 121 to 122 (TT) participates in substrate binding.

The protein belongs to the alpha-carbonic anhydrase family.

This Homo sapiens (Human) protein is Putative inactive carbonic anhydrase 5B-like protein (CA5BP1).